A 278-amino-acid chain; its full sequence is Rhamnulose-1-phosphate aldolase (278 aa).

Residue Glu-116 is part of the active site. Zn(2+) contacts are provided by His-139, His-141, and His-210.

The protein belongs to the aldolase class II family. RhaD subfamily. Requires Zn(2+) as cofactor.

Its subcellular location is the cytoplasm. The catalysed reaction is L-rhamnulose 1-phosphate = (S)-lactaldehyde + dihydroxyacetone phosphate. Its pathway is carbohydrate degradation; L-rhamnose degradation; glycerone phosphate from L-rhamnose: step 3/3. Catalyzes the reversible cleavage of L-rhamnulose-1-phosphate to dihydroxyacetone phosphate (DHAP) and L-lactaldehyde. The sequence is that of Rhamnulose-1-phosphate aldolase from Listeria welshimeri serovar 6b (strain ATCC 35897 / DSM 20650 / CCUG 15529 / CIP 8149 / NCTC 11857 / SLCC 5334 / V8).